Consider the following 271-residue polypeptide: RELT-like protein 1 (271 aa).

The N-terminal stretch at 1–23 (MAPRGLPGSAVLAAAVFVGGAVS) is a signal peptide. Over 24–57 (SPLVRSDHSGSHPLPSKTETTPSPTNNNGNGHPE) the chain is Extracellular. A disordered region spans residues 27-52 (VRSDHSGSHPLPSKTETTPSPTNNNG). Low complexity predominate over residues 36–52 (PLPSKTETTPSPTNNNG). Residues 58-78 (YIAYALVPVFFVMGLFGVLIC) traverse the membrane as a helical segment. Topologically, residues 79-271 (HLLKKKGYRC…PVKRQQSDSE (193 aa)) are cytoplasmic. Phosphoserine occurs at positions 109 and 114. Disordered regions lie at residues 144 to 168 (CDPE…LSPG) and 231 to 271 (TKVE…SDSE). Residues 155-165 (PGSPPVSPGPL) are compositionally biased toward pro residues. Over residues 231–244 (TKVEPKSNQKERRS) the composition is skewed to basic and acidic residues. 2 positions are modified to phosphoserine: serine 244 and serine 247.

The protein belongs to the RELT family. As to quaternary structure, interacts with RELT, RELL2, OXSR1 and PLSCR1.

It localises to the cell membrane. Induces activation of MAPK14/p38 cascade, when overexpressed. Induces apoptosis, when overexpressed. The polypeptide is RELT-like protein 1 (RELL1) (Bos taurus (Bovine)).